The following is a 214-amino-acid chain: Adenylate kinase (214 aa).

Glycine 10 to threonine 15 is an ATP binding site. An NMP region spans residues serine 30 to valine 59. AMP contacts are provided by residues threonine 31, arginine 36, glutamine 57–valine 59, glycine 85–arginine 88, and glutamine 92. Residues glycine 122–aspartate 159 form an LID region. ATP contacts are provided by residues arginine 123 and threonine 132–tyrosine 133. Residues arginine 156 and arginine 167 each coordinate AMP. Lysine 200 is a binding site for ATP.

It belongs to the adenylate kinase family. As to quaternary structure, monomer.

The protein resides in the cytoplasm. It catalyses the reaction AMP + ATP = 2 ADP. It functions in the pathway purine metabolism; AMP biosynthesis via salvage pathway; AMP from ADP: step 1/1. Functionally, catalyzes the reversible transfer of the terminal phosphate group between ATP and AMP. Plays an important role in cellular energy homeostasis and in adenine nucleotide metabolism. In Vibrio atlanticus (strain LGP32) (Vibrio splendidus (strain Mel32)), this protein is Adenylate kinase.